The following is a 333-amino-acid chain: Adenosine deaminase (333 aa).

Positions 12 and 14 each coordinate Zn(2+). His-14 and Asp-16 together coordinate substrate. Pentostatin is bound by residues 14–16 (HLD), Ser-141, and Gly-170. Residue Gly-170 participates in substrate binding. His-197 contributes to the Zn(2+) binding site. The pentostatin site is built by Glu-200, His-221, and Asp-278. Glu-200 acts as the Proton donor in catalysis. Zn(2+) is bound at residue Asp-278. Substrate is bound at residue Asp-279.

This sequence belongs to the metallo-dependent hydrolases superfamily. Adenosine and AMP deaminases family. Adenosine deaminase subfamily. Zn(2+) serves as cofactor.

It carries out the reaction adenosine + H2O + H(+) = inosine + NH4(+). The catalysed reaction is 2'-deoxyadenosine + H2O + H(+) = 2'-deoxyinosine + NH4(+). Its function is as follows. Catalyzes the hydrolytic deamination of adenosine and 2-deoxyadenosine. This chain is Adenosine deaminase, found in Salmonella typhimurium (strain LT2 / SGSC1412 / ATCC 700720).